The sequence spans 234 residues: Putative ankyrin repeat protein RF_0063 (234 aa).

2 ANK repeats span residues 149–180 (NNNT…TISI) and 184–213 (YNNT…QKAL).

The polypeptide is Putative ankyrin repeat protein RF_0063 (Rickettsia felis (strain ATCC VR-1525 / URRWXCal2) (Rickettsia azadi)).